We begin with the raw amino-acid sequence, 93 residues long: Large ribosomal subunit protein uL23c (93 aa).

The protein belongs to the universal ribosomal protein uL23 family. In terms of assembly, part of the 50S ribosomal subunit.

It is found in the plastid. Its subcellular location is the chloroplast. Binds to 23S rRNA. The chain is Large ribosomal subunit protein uL23c (rpl23) from Fragaria ananassa (Strawberry).